A 295-amino-acid chain; its full sequence is MSTPWEKAAVLVEALPYIKKFYGKTIVIKYGGHAMLDDSLKEAVLTDAVLMKYVGMHPVIVHGGGPEITEMLKRVGKDSRFVGGLRVTDGETMEIVEMVLVGKINKGIVSRINRIGGLAVGLSGKDAGLFQAVKKYRKVRTPEGREETADIGFVGEISRVNPQIVSTVIAEGYIPVIAPVAVGPEGESYNINADYAAGRLAAALGADKLIILTDVEGIMADRSDPGSLISVLRASEVPSLIERGVIDGGMIPKVECCLDALAGGVRTTHILDGRVPHSILLEIFTDKGIGTMVEK.

Substrate-binding positions include glycine 64 to glycine 65, arginine 86, and asparagine 190.

Belongs to the acetylglutamate kinase family. ArgB subfamily.

Its subcellular location is the cytoplasm. It catalyses the reaction N-acetyl-L-glutamate + ATP = N-acetyl-L-glutamyl 5-phosphate + ADP. It functions in the pathway amino-acid biosynthesis; L-arginine biosynthesis; N(2)-acetyl-L-ornithine from L-glutamate: step 2/4. Functionally, catalyzes the ATP-dependent phosphorylation of N-acetyl-L-glutamate. The chain is Acetylglutamate kinase from Pelotomaculum thermopropionicum (strain DSM 13744 / JCM 10971 / SI).